The sequence spans 1976 residues: DNA-directed RNA polymerase V subunit 1 (1976 aa).

The Zn(2+) site is built by cysteine 57, cysteine 60, cysteine 68, histidine 71, cysteine 98, and cysteine 101. Aspartate 449, aspartate 451, and aspartate 453 together coordinate Mg(2+). Residues 751-763 (PYEEMAHSIAARE) are bridging helix. Residues 1215–1216 (WG) form repeat 1. Residues 1215–1693 (WGKRVDVGTG…AKKFPSSGGW (479 aa)) are 18 X 2 AA repeats of [WG]-[GW] repeats. Disordered regions lie at residues 1272-1291 (EEEM…LGEP), 1298-1718 (DFQN…EDNL), and 1847-1976 (FTKP…QTQT). 2 stretches are compositionally biased toward basic and acidic residues: residues 1281 to 1291 (SPERDSALGEP) and 1298 to 1307 (DFQNLHDEGK). Repeat unit 2 spans residues 1329–1330 (WG). The segment covering 1332–1348 (SKSTGGEANPESNWEKT) has biased composition (polar residues). The span at 1349–1371 (TNVEKEDAWSSWNTRKDAQESSK) shows a compositional bias: basic and acidic residues. Repeat copies occupy residues 1378 to 1379 (WG), 1415 to 1416 (WG), 1430 to 1431 (WG), 1439 to 1440 (WG), 1447 to 1448 (WG), 1464 to 1465 (WG), 1498 to 1499 (WG), 1528 to 1529 (WG), 1545 to 1546 (WG), 1562 to 1563 (WG), 1596 to 1597 (WG), 1604 to 1605 (WG), 1621 to 1622 (WG), 1638 to 1639 (WG), and 1641 to 1642 (WG). Residues 1415–1430 (WGHKSVSDKSWDKKNW) are compositionally biased toward basic and acidic residues. Positions 1491 to 1501 (TESNGATWGSS) are enriched in polar residues. Over residues 1648–1678 (AEDKDTNEDDRNPWVSLKETKSREKDDKERS) the composition is skewed to basic and acidic residues. A run of 2 repeats spans residues 1680–1681 (WG) and 1692–1693 (GW). Residues 1869-1878 (EQSQPPNQSI) show a composition bias toward polar residues. Over residues 1886-1976 (QTQTQSQSPS…SSQSPSQTQT (91 aa)) the composition is skewed to low complexity.

This sequence belongs to the RNA polymerase beta' chain family. As to quaternary structure, component of the RNA polymerase V complex. Interacts with NRPD4, NRPD2A, and (via C-terminus) with AGO4. Interacts with SUVH2. Mostly expressed in flowers, and, to a lower extent, in leaves. Present in sperm cells.

The protein localises to the nucleus. Its subcellular location is the nucleolus. The catalysed reaction is RNA(n) + a ribonucleoside 5'-triphosphate = RNA(n+1) + diphosphate. Functionally, DNA-dependent RNA polymerase catalyzes the transcription of DNA into RNA using the four ribonucleoside triphosphates as substrates. Largest and catalytic component of RNA polymerase V involved in RNA-directed DNA methylation-dependent (RdDM) silencing of endogenous repeated sequences, including transposable elements. Also required for full erasure of methylation when the RNA trigger is withdrawn. Seems also involved in the synthesis of short-interfering RNAs (siRNA). Essential component of a self-reinforcing loop coupling de novo DNA methylation to siRNA production. Involved in the maintenance of post-transcriptional RNA silencing. The protein is DNA-directed RNA polymerase V subunit 1 (NRPE1) of Arabidopsis thaliana (Mouse-ear cress).